The sequence spans 638 residues: 1-deoxy-D-xylulose-5-phosphate synthase (638 aa).

Thiamine diphosphate is bound by residues His-75 and 116–118 (AHS). Asp-147 is a Mg(2+) binding site. Thiamine diphosphate is bound by residues 148 to 149 (GA), Asn-177, Tyr-288, and Glu-370. Asn-177 contributes to the Mg(2+) binding site.

This sequence belongs to the transketolase family. DXPS subfamily. In terms of assembly, homodimer. Mg(2+) is required as a cofactor. Requires thiamine diphosphate as cofactor.

The enzyme catalyses D-glyceraldehyde 3-phosphate + pyruvate + H(+) = 1-deoxy-D-xylulose 5-phosphate + CO2. Its pathway is metabolic intermediate biosynthesis; 1-deoxy-D-xylulose 5-phosphate biosynthesis; 1-deoxy-D-xylulose 5-phosphate from D-glyceraldehyde 3-phosphate and pyruvate: step 1/1. Catalyzes the acyloin condensation reaction between C atoms 2 and 3 of pyruvate and glyceraldehyde 3-phosphate to yield 1-deoxy-D-xylulose-5-phosphate (DXP). This chain is 1-deoxy-D-xylulose-5-phosphate synthase, found in Cupriavidus necator (strain ATCC 17699 / DSM 428 / KCTC 22496 / NCIMB 10442 / H16 / Stanier 337) (Ralstonia eutropha).